The sequence spans 275 residues: Phosphonoacetaldehyde hydrolase (275 aa).

Asp-15 functions as the Nucleophile in the catalytic mechanism. Positions 15 and 17 each coordinate Mg(2+). Lys-56 serves as the catalytic Schiff-base intermediate with substrate. Residue Asp-189 participates in Mg(2+) binding.

It belongs to the HAD-like hydrolase superfamily. PhnX family. Homodimer. Mg(2+) is required as a cofactor.

It catalyses the reaction phosphonoacetaldehyde + H2O = acetaldehyde + phosphate + H(+). Involved in phosphonate degradation. The sequence is that of Phosphonoacetaldehyde hydrolase from Pseudomonas entomophila (strain L48).